The following is a 344-amino-acid chain: Leucine-rich repeat-containing protein 75A (344 aa).

The segment at methionine 1–glutamate 25 is disordered. Low complexity predominate over residues alanine 11–glycine 21. LRR repeat units lie at residues valine 204–aspartate 217 and leucine 229–leucine 242. Residues leucine 295–threonine 344 are disordered.

Belongs to the LRRC75 family.

This is Leucine-rich repeat-containing protein 75A (LRRC75A) from Homo sapiens (Human).